A 369-amino-acid polypeptide reads, in one-letter code: Peptide chain release factor 2 (369 aa).

Residue Q250 is modified to N5-methylglutamine.

Belongs to the prokaryotic/mitochondrial release factor family. Post-translationally, methylated by PrmC. Methylation increases the termination efficiency of RF2.

It is found in the cytoplasm. In terms of biological role, peptide chain release factor 2 directs the termination of translation in response to the peptide chain termination codons UGA and UAA. This Rickettsia prowazekii (strain Madrid E) protein is Peptide chain release factor 2 (prfB).